Here is a 373-residue protein sequence, read N- to C-terminus: Protein-glutamate methylesterase/protein-glutamine glutaminase 1 (373 aa).

Residues 16-133 (RVVVVDDSAL…ASGLTELSDQ (118 aa)) form the Response regulatory domain. D67 is subject to 4-aspartylphosphate. Residues 175–367 (RVSTEKLICI…PALIAKLSSA (193 aa)) form the CheB-type methylesterase domain. Active-site residues include S187, H213, and D309.

The protein belongs to the CheB family. Phosphorylated by CheA. Phosphorylation of the N-terminal regulatory domain activates the methylesterase activity.

It is found in the cytoplasm. The catalysed reaction is [protein]-L-glutamate 5-O-methyl ester + H2O = L-glutamyl-[protein] + methanol + H(+). The enzyme catalyses L-glutaminyl-[protein] + H2O = L-glutamyl-[protein] + NH4(+). Functionally, involved in chemotaxis. Part of a chemotaxis signal transduction system that modulates chemotaxis in response to various stimuli. Catalyzes the demethylation of specific methylglutamate residues introduced into the chemoreceptors (methyl-accepting chemotaxis proteins or MCP) by CheR. Also mediates the irreversible deamidation of specific glutamine residues to glutamic acid. This Albidiferax ferrireducens (strain ATCC BAA-621 / DSM 15236 / T118) (Rhodoferax ferrireducens) protein is Protein-glutamate methylesterase/protein-glutamine glutaminase 1.